We begin with the raw amino-acid sequence, 504 residues long: Glycerol kinase (504 aa).

ADP is bound at residue T12. T12, T13, and S14 together coordinate ATP. Sn-glycerol 3-phosphate is bound at residue T12. R16 is an ADP binding site. Positions 82, 83, 134, and 246 each coordinate sn-glycerol 3-phosphate. Residues R82, E83, Y134, D246, and Q247 each coordinate glycerol. Residues T268 and G312 each contribute to the ADP site. Residues T268, G312, Q316, and G413 each contribute to the ATP site. ADP contacts are provided by G413 and N417.

It belongs to the FGGY kinase family.

It carries out the reaction glycerol + ATP = sn-glycerol 3-phosphate + ADP + H(+). It participates in polyol metabolism; glycerol degradation via glycerol kinase pathway; sn-glycerol 3-phosphate from glycerol: step 1/1. With respect to regulation, inhibited by fructose 1,6-bisphosphate (FBP). In terms of biological role, key enzyme in the regulation of glycerol uptake and metabolism. Catalyzes the phosphorylation of glycerol to yield sn-glycerol 3-phosphate. The sequence is that of Glycerol kinase from Pseudarthrobacter chlorophenolicus (strain ATCC 700700 / DSM 12829 / CIP 107037 / JCM 12360 / KCTC 9906 / NCIMB 13794 / A6) (Arthrobacter chlorophenolicus).